The chain runs to 95 residues: Enhancer of yellow 2 transcription factor (95 aa).

The protein belongs to the ENY2 family. As to quaternary structure, component of the nuclear pore complex (NPC)-associated AMEX complex (anchoring and mRNA export complex), composed of at least e(y)2 and xmas-2. Component of the SAGA transcription coactivator-HAT complexes, at least composed of Ada2b, e(y)2, Pcaf/Gcn5, Taf10 and Nipped-A/Trrap. Within the SAGA complex, e(y)2, Sgf11, and not/nonstop form an additional subcomplex of SAGA called the DUB module (deubiquitination module). Component of the THO complex, composed of at least e(y)2, HPR1, THO2, THOC5, THOC6 and THOC7. Interacts with e(y)1. Interacts with su(Hw) (via zinc fingers). Interacts with xmas-2; required for localization to the nuclear periphery. Interacts with the nuclear pore complex (NPC).

The protein resides in the nucleus. Its subcellular location is the nucleoplasm. The protein localises to the cytoplasm. Involved in mRNA export coupled transcription activation by association with both the AMEX and the SAGA complexes. The SAGA complex is a multiprotein complex that activates transcription by remodeling chromatin and mediating histone acetylation and deubiquitination. Within the SAGA complex, participates in a subcomplex that specifically deubiquitinates histone H2B. The SAGA complex is recruited to specific gene promoters by activators, where it is required for transcription. Required for nuclear receptor-mediated transactivation. Involved in transcription elongation by recruiting the THO complex onto nascent mRNA. The AMEX complex functions in docking export-competent ribonucleoprotein particles (mRNPs) to the nuclear entrance of the nuclear pore complex (nuclear basket). AMEX participates in mRNA export and accurate chromatin positioning in the nucleus by tethering genes to the nuclear periphery. This chain is Enhancer of yellow 2 transcription factor, found in Drosophila virilis (Fruit fly).